Here is a 447-residue protein sequence, read N- to C-terminus: Growth/differentiation factor 7 (447 aa).

The N-terminal stretch at 1–19 is a signal peptide; sequence MDLSAAAALCLWLLSACRP. Positions 20 to 318 are excised as a propeptide; sequence RDGLEAAAVL…AVTAGRRRRR (299 aa). An N-linked (GlcNAc...) asparagine glycan is attached at asparagine 80. The segment at 292–346 is disordered; the sequence is LAAQPPPDPGTGTGSPRAVTAGRRRRRTALAGTRTAQGSGGGAGRGHGRRGRSRC. Residues 337–346 show a composition bias toward basic residues; it reads GHGRRGRSRC. Cystine bridges form between cysteine 346-cysteine 412, cysteine 375-cysteine 444, and cysteine 379-cysteine 446.

This sequence belongs to the TGF-beta family. Homodimer; disulfide-linked. In terms of tissue distribution, highly expressed in the primary aera of brain neocortex.

It localises to the secreted. May play an active role in the motor area of the primate neocortex. The sequence is that of Growth/differentiation factor 7 (GDF7) from Chlorocebus aethiops (Green monkey).